Reading from the N-terminus, the 324-residue chain is Probable carboxylesterase 9 (324 aa).

The Involved in the stabilization of the negatively charged intermediate by the formation of the oxyanion hole signature appears at 86 to 88; sequence HGS. Catalysis depends on residues S171, D272, and H302.

The protein belongs to the 'GDXG' lipolytic enzyme family. In terms of tissue distribution, expressed in flowers.

The catalysed reaction is a carboxylic ester + H2O = an alcohol + a carboxylate + H(+). In terms of biological role, carboxylesterase acting on esters with varying acyl chain length. The sequence is that of Probable carboxylesterase 9 (CXE9) from Arabidopsis thaliana (Mouse-ear cress).